The following is a 75-amino-acid chain: Sec-independent protein translocase protein TatA (75 aa).

A helical transmembrane segment spans residues 1 to 21; sequence MGSFSIWHWLIVLVIVVLVFG. Composition is skewed to basic and acidic residues over residues 43-54 and 66-75; these read MRDSEKSGEDVQ and ATDKSHTVSH. The interval 43–75 is disordered; it reads MRDSEKSGEDVQQKIGGDTLDAQATDKSHTVSH.

It belongs to the TatA/E family. As to quaternary structure, the Tat system comprises two distinct complexes: a TatABC complex, containing multiple copies of TatA, TatB and TatC subunits, and a separate TatA complex, containing only TatA subunits. Substrates initially bind to the TatABC complex, which probably triggers association of the separate TatA complex to form the active translocon.

It localises to the cell inner membrane. Its function is as follows. Part of the twin-arginine translocation (Tat) system that transports large folded proteins containing a characteristic twin-arginine motif in their signal peptide across membranes. TatA could form the protein-conducting channel of the Tat system. In Aromatoleum aromaticum (strain DSM 19018 / LMG 30748 / EbN1) (Azoarcus sp. (strain EbN1)), this protein is Sec-independent protein translocase protein TatA.